The primary structure comprises 377 residues: Chaperone protein DnaJ (377 aa).

The J domain occupies 5–70 (DFYEVLGVER…SKRAAYDQYG (66 aa)). The CR-type zinc-finger motif lies at 136–214 (GTTVTIRVPT…CHGQGRVEEQ (79 aa)). Zn(2+) contacts are provided by Cys-149, Cys-152, Cys-166, Cys-169, Cys-188, Cys-191, Cys-202, and Cys-205. CXXCXGXG motif repeat units follow at residues 149-156 (CKTCNGSG), 166-173 (CTTCGGIG), 188-195 (CPRCHGTG), and 202-209 (CGSCHGQG).

The protein belongs to the DnaJ family. Homodimer. Requires Zn(2+) as cofactor.

It localises to the cytoplasm. Participates actively in the response to hyperosmotic and heat shock by preventing the aggregation of stress-denatured proteins and by disaggregating proteins, also in an autonomous, DnaK-independent fashion. Unfolded proteins bind initially to DnaJ; upon interaction with the DnaJ-bound protein, DnaK hydrolyzes its bound ATP, resulting in the formation of a stable complex. GrpE releases ADP from DnaK; ATP binding to DnaK triggers the release of the substrate protein, thus completing the reaction cycle. Several rounds of ATP-dependent interactions between DnaJ, DnaK and GrpE are required for fully efficient folding. Also involved, together with DnaK and GrpE, in the DNA replication of plasmids through activation of initiation proteins. This is Chaperone protein DnaJ from Pseudomonas paraeruginosa (strain DSM 24068 / PA7) (Pseudomonas aeruginosa (strain PA7)).